The following is a 990-amino-acid chain: Nucleotide-binding leucine-rich repeat (NLR)-like protein (990 aa).

The interval Gly-22–Leu-304 is purine nucleoside phosphorylase domain. Residues Arg-334–Glu-563 form the NB-ARC domain. TPR repeat units lie at residues Arg-732–Ala-765, Ile-774–Val-807, Leu-816–Ala-849, Leu-858–Thr-891, Leu-900–Val-933, and Leu-942–Asp-975. The disordered stretch occupies residues Gln-965 to Lys-990. A compositionally biased stretch (basic residues) spans Lys-981–Lys-990.

It catalyses the reaction ATP + H2O = D-ribose 5-triphosphate + adenine. It carries out the reaction dATP + H2O = 2-deoxyribose 5-triphosphate + adenine. Functionally, the N-terminal purine nucleoside phosphorylase (PNP) domain cleaves the N-glycosidic bond of ATP, and to a lesser extent dATP; has very weak activity on adenosine and deoxyadenosine and no activity on (d)ADP or (d)AMP. The polypeptide is Nucleotide-binding leucine-rich repeat (NLR)-like protein (Hyaloscypha variabilis (strain UAMH 11265 / GT02V1 / F) (Meliniomyces variabilis)).